Reading from the N-terminus, the 116-residue chain is uncharacterized protein (116 aa).

A run of 2 helical transmembrane segments spans residues 24-44 (VPFAAAGGYPISFLFIKVLTA) and 70-90 (VILTHFLVPIFFFLFQYIILS).

It is found in the membrane. This is an uncharacterized protein from Saccharomyces cerevisiae (strain ATCC 204508 / S288c) (Baker's yeast).